Consider the following 103-residue polypeptide: MSSQKIRIRLKAFDYNLIDRSAQEIVETAKRTGAVVKGPVPLPTKIERFNVLRSPHVNKTSRDQLEIRTHLRLMDIVDPTDKTVDALMKLDLPAGVDVEIKLQ.

Belongs to the universal ribosomal protein uS10 family. As to quaternary structure, part of the 30S ribosomal subunit.

Involved in the binding of tRNA to the ribosomes. The sequence is that of Small ribosomal subunit protein uS10 from Chromobacterium violaceum (strain ATCC 12472 / DSM 30191 / JCM 1249 / CCUG 213 / NBRC 12614 / NCIMB 9131 / NCTC 9757 / MK).